The sequence spans 318 residues: Glutathione synthetase (318 aa).

Residues Lys129–Glu314 form the ATP-grasp domain. His155–Gly211 serves as a coordination point for ATP. Mg(2+) contacts are provided by Glu285 and Asn287.

It belongs to the prokaryotic GSH synthase family. It depends on Mg(2+) as a cofactor. Requires Mn(2+) as cofactor.

It catalyses the reaction gamma-L-glutamyl-L-cysteine + glycine + ATP = glutathione + ADP + phosphate + H(+). Its pathway is sulfur metabolism; glutathione biosynthesis; glutathione from L-cysteine and L-glutamate: step 2/2. This Bordetella pertussis (strain Tohama I / ATCC BAA-589 / NCTC 13251) protein is Glutathione synthetase.